The sequence spans 526 residues: Glucose-6-phosphate isomerase (526 aa).

Residue Glu-320 is the Proton donor of the active site. Residues His-349 and Lys-453 contribute to the active site.

This sequence belongs to the GPI family.

It localises to the cytoplasm. The catalysed reaction is alpha-D-glucose 6-phosphate = beta-D-fructose 6-phosphate. It participates in carbohydrate biosynthesis; gluconeogenesis. Its pathway is carbohydrate degradation; glycolysis; D-glyceraldehyde 3-phosphate and glycerone phosphate from D-glucose: step 2/4. In terms of biological role, catalyzes the reversible isomerization of glucose-6-phosphate to fructose-6-phosphate. The protein is Glucose-6-phosphate isomerase of Gloeothece citriformis (strain PCC 7424) (Cyanothece sp. (strain PCC 7424)).